Here is a 224-residue protein sequence, read N- to C-terminus: Ribonuclease T (224 aa).

The Exonuclease domain maps to 20-195 (VVIDVETAGF…YDTQKTAELF (176 aa)). Mg(2+) contacts are provided by Asp-23, Glu-25, His-182, and Asp-187. The active-site Proton donor/acceptor is the His-182.

The protein belongs to the RNase T family. Homodimer. Requires Mg(2+) as cofactor.

Trims short 3' overhangs of a variety of RNA species, leaving a one or two nucleotide 3' overhang. Responsible for the end-turnover of tRNA: specifically removes the terminal AMP residue from uncharged tRNA (tRNA-C-C-A). Also appears to be involved in tRNA biosynthesis. The chain is Ribonuclease T from Vibrio cholerae serotype O1 (strain ATCC 39315 / El Tor Inaba N16961).